The following is a 394-amino-acid chain: Protein-glutamate methylesterase/protein-glutamine glutaminase (394 aa).

A disordered region spans residues 1-24 (MSDGFGRPPPPAPAGHPTGAAGGD). Over residues 15–24 (GHPTGAAGGD) the composition is skewed to low complexity. The Response regulatory domain occupies 27–145 (RVMVVDDSAV…EIGGADAFKR (119 aa)). 4-aspartylphosphate is present on Asp-78. The region spanning 191 to 393 (PAPAVGSVGQ…PYIRKFASRA (203 aa)) is the CheB-type methylesterase domain. Catalysis depends on residues Ser-211, His-238, and Asp-335.

Belongs to the CheB family. Post-translationally, phosphorylated by CheA. Phosphorylation of the N-terminal regulatory domain activates the methylesterase activity.

The protein resides in the cytoplasm. The catalysed reaction is [protein]-L-glutamate 5-O-methyl ester + H2O = L-glutamyl-[protein] + methanol + H(+). The enzyme catalyses L-glutaminyl-[protein] + H2O = L-glutamyl-[protein] + NH4(+). Functionally, involved in chemotaxis. Part of a chemotaxis signal transduction system that modulates chemotaxis in response to various stimuli. Catalyzes the demethylation of specific methylglutamate residues introduced into the chemoreceptors (methyl-accepting chemotaxis proteins or MCP) by CheR. Also mediates the irreversible deamidation of specific glutamine residues to glutamic acid. In Azospirillum brasilense, this protein is Protein-glutamate methylesterase/protein-glutamine glutaminase.